The following is a 699-amino-acid chain: MEIPPQEAPPGPGADGEAEEAPVEAPSPGPASPPADGRLKAAAKRVTFPSDEDIVSGAVEPKDPWRHAQNVTVDEIIGAYKQACQKLNCRQIPKLLRQLQEFTDLGHRIDCLDLKGEKLDYKTCEALEEVFKRLQFKVVDLEQTNLDEDGASALFDMIEYYESATHLNISFNKHIGTRGWQAAAHMMRKTSCLQYLDARNTPLLDHSAPFVARALRIRSSLAVLHLESSSLSGRPLMLLATALKMNMTLRELYLADNKLNGLQDSAQLGNLLKFNCSLQILDLRNNHVLDSGLAYICEGLKEQRKGLATLVLWNNQLTHTGMAFLGMTLPHTHSLETLNLGHNPIGNEGVRNLKNGLISNRSVLRLGLASTKLTCEGAVAVAEFIAESPRLLRLDLRENEIKTGGLMALSLALKVNHSLLRLDLDREPKKEAVKSFIETQKALLAEIQNGCKRNFVLVREREEKEQRLQLSASMPEITVTEPQPDDEPREEPAAEAQENGAPGPSPGPDSDSDSDSEGEDRDEADGERAEAPCPTLVPPTDSLGPGDRSPPGCPSSPAEQRISVSSPGWGHKVFVVTRVESPPERAEPPVPPAPPGPVSPPASASPPTSPFPTPTEAASTPDPGPPEPQPPLEPPQVGPPLPNGLKPEFALALSPEPPPGPEAKVGSCGLEHELSCSKNEKELEELLLEASQESGQETL.

Residues Met-1–Pro-12 are compositionally biased toward pro residues. The segment at Met-1–Ala-42 is disordered. 2 positions are modified to phosphoserine: Ser-50 and Ser-56. LRR repeat units lie at residues Ser-220–Ala-240, Thr-248–Gly-269, Ser-277–Cys-297, Gly-306–Gly-326, and Ser-334–Lys-354. The interval Arg-467–Ser-667 is disordered. Residues Ser-510 to Asp-525 are compositionally biased toward acidic residues. Ser-566 carries the post-translational modification Phosphoserine. Composition is skewed to pro residues over residues Pro-588–Thr-613 and Asp-622–Pro-642.

The protein belongs to the PPP1R37 family. In terms of assembly, interacts with PPP1CA.

In terms of biological role, inhibits phosphatase activity of protein phosphatase 1 (PP1) complexes. The chain is Protein phosphatase 1 regulatory subunit 37 (PPP1R37) from Bos taurus (Bovine).